Here is a 201-residue protein sequence, read N- to C-terminus: uncharacterized protein (201 aa).

In terms of assembly, interacts with the chaperones HSP82 and HSC82.

This is an uncharacterized protein from Saccharomyces cerevisiae (strain ATCC 204508 / S288c) (Baker's yeast).